A 356-amino-acid chain; its full sequence is Tyrosine recombinase XerS (356 aa).

A Core-binding (CB) domain is found at 16–121 (IMPWYVLDYY…ALSSLYKYLT (106 aa)). A Tyr recombinase domain is found at 169 to 354 (AFLDYVDKEY…VNDEQKTALD (186 aa)). Catalysis depends on residues Arg-210, Lys-234, His-306, Arg-309, and His-332. Tyr-341 (O-(3'-phospho-DNA)-tyrosine intermediate) is an active-site residue.

The protein belongs to the 'phage' integrase family. XerS subfamily.

The protein localises to the cytoplasm. FtsK is required for recombination. Site-specific tyrosine recombinase, which acts by catalyzing the cutting and rejoining of the recombining DNA molecules. Essential to convert dimers of the bacterial chromosome into monomers to permit their segregation at cell division. This chain is Tyrosine recombinase XerS, found in Streptococcus pyogenes serotype M12 (strain MGAS9429).